Here is a 262-residue protein sequence, read N- to C-terminus: F-actin-capping protein subunit alpha (262 aa).

It belongs to the F-actin-capping protein alpha subunit family. In terms of assembly, heterodimer of an alpha and a beta subunit.

Its function is as follows. F-actin-capping proteins bind in a Ca(2+)-independent manner to the fast growing ends of actin filaments (barbed end) thereby blocking the exchange of subunits at these ends. Unlike other capping proteins (such as gelsolin and severin), these proteins do not sever actin filaments. The polypeptide is F-actin-capping protein subunit alpha (CAP1) (Kluyveromyces lactis (strain ATCC 8585 / CBS 2359 / DSM 70799 / NBRC 1267 / NRRL Y-1140 / WM37) (Yeast)).